The sequence spans 294 residues: Proteasome subunit beta (294 aa).

A propeptide spans 1-65 (MTADRPALRT…MESGDLAPHG (65 aa)) (removed in mature form; by autocatalysis). Catalysis depends on Thr-66, which acts as the Nucleophile.

The protein belongs to the peptidase T1B family. In terms of assembly, the 20S proteasome core is composed of 14 alpha and 14 beta subunits that assemble into four stacked heptameric rings, resulting in a barrel-shaped structure. The two inner rings, each composed of seven catalytic beta subunits, are sandwiched by two outer rings, each composed of seven alpha subunits. The catalytic chamber with the active sites is on the inside of the barrel. Has a gated structure, the ends of the cylinder being occluded by the N-termini of the alpha-subunits. Is capped by the proteasome-associated ATPase, ARC.

The protein localises to the cytoplasm. The catalysed reaction is Cleavage of peptide bonds with very broad specificity.. Its pathway is protein degradation; proteasomal Pup-dependent pathway. The formation of the proteasomal ATPase ARC-20S proteasome complex, likely via the docking of the C-termini of ARC into the intersubunit pockets in the alpha-rings, may trigger opening of the gate for substrate entry. Interconversion between the open-gate and close-gate conformations leads to a dynamic regulation of the 20S proteasome proteolysis activity. Functionally, component of the proteasome core, a large protease complex with broad specificity involved in protein degradation. The protein is Proteasome subunit beta of Rhodococcus opacus (strain B4).